Consider the following 186-residue polypeptide: dCTP deaminase (186 aa).

107 to 112 (KSTYAR) is a dCTP binding site. E133 functions as the Proton donor/acceptor in the catalytic mechanism. Residues Q152, Y166, and Q176 each coordinate dCTP.

This sequence belongs to the dCTP deaminase family. Homotrimer.

The catalysed reaction is dCTP + H2O + H(+) = dUTP + NH4(+). The protein operates within pyrimidine metabolism; dUMP biosynthesis; dUMP from dCTP (dUTP route): step 1/2. Functionally, catalyzes the deamination of dCTP to dUTP. In Campylobacter curvus (strain 525.92), this protein is dCTP deaminase.